The chain runs to 987 residues: Leucine--tRNA ligase (987 aa).

Positions 69–80 (PYPSGKGLHVGH) match the 'HIGH' region motif. The 'KMSKS' region motif lies at 760 to 764 (KMGKS). Lysine 763 contributes to the ATP binding site.

Belongs to the class-I aminoacyl-tRNA synthetase family.

It is found in the cytoplasm. The enzyme catalyses tRNA(Leu) + L-leucine + ATP = L-leucyl-tRNA(Leu) + AMP + diphosphate. The sequence is that of Leucine--tRNA ligase from Bifidobacterium longum (strain NCC 2705).